Consider the following 97-residue polypeptide: Serine protease inhibitor Kazal-type 14 (97 aa).

The N-terminal stretch at 1 to 21 (MAKSFPVFSLLSFILIHLVLS) is a signal peptide. Residues 34 to 97 (GIIKVKCPYE…RIRFYHDGKC (64 aa)) form the Kazal-like domain. Disulfide bonds link cysteine 40-cysteine 79, cysteine 57-cysteine 76, and cysteine 65-cysteine 97. An N-linked (GlcNAc...) asparagine glycan is attached at asparagine 51.

The protein resides in the secreted. In terms of biological role, may be a serine protease inhibitor. The protein is Serine protease inhibitor Kazal-type 14 (SPINK14) of Homo sapiens (Human).